A 67-amino-acid chain; its full sequence is uncharacterized protein (67 aa).

A run of 2 helical transmembrane segments spans residues 8-28 and 41-61; these read MWFA…IYLS and ISSF…VVVF.

The protein localises to the cell membrane. This is an uncharacterized protein from Bacillus subtilis (strain 168).